Consider the following 189-residue polypeptide: MEVILLERVAKLGQMGETVKVRPGFARNYLLARGKALRATEANKKRFEDQRIQLEARNLERRNEAQAVAEKLDGQSFVLIRQSGETGVLYGSVSTRDLAEVLTQNGFTVGRDQFSLNQPIKTLGLHTVPVVLHPEVEVTVTVNVARSPEEAERQARGESTVVRDELDLEELGLEVGAALAEAGPEGEER.

The protein belongs to the bacterial ribosomal protein bL9 family.

Binds to the 23S rRNA. The chain is Large ribosomal subunit protein bL9 from Methylobacterium nodulans (strain LMG 21967 / CNCM I-2342 / ORS 2060).